A 388-amino-acid polypeptide reads, in one-letter code: Succinate--CoA ligase [ADP-forming] subunit beta (388 aa).

Residues 9 to 244 (KQLFAEYGLP…PSQDDAREAH (236 aa)) enclose the ATP-grasp domain. ATP contacts are provided by residues Lys-46, 53–55 (GRG), Glu-99, Thr-102, and Glu-107. Residues Asn-199 and Asp-213 each contribute to the Mg(2+) site. Substrate is bound by residues Asn-264 and 321–323 (GIV).

This sequence belongs to the succinate/malate CoA ligase beta subunit family. As to quaternary structure, heterotetramer of two alpha and two beta subunits. Mg(2+) serves as cofactor.

It catalyses the reaction succinate + ATP + CoA = succinyl-CoA + ADP + phosphate. The enzyme catalyses GTP + succinate + CoA = succinyl-CoA + GDP + phosphate. It participates in carbohydrate metabolism; tricarboxylic acid cycle; succinate from succinyl-CoA (ligase route): step 1/1. In terms of biological role, succinyl-CoA synthetase functions in the citric acid cycle (TCA), coupling the hydrolysis of succinyl-CoA to the synthesis of either ATP or GTP and thus represents the only step of substrate-level phosphorylation in the TCA. The beta subunit provides nucleotide specificity of the enzyme and binds the substrate succinate, while the binding sites for coenzyme A and phosphate are found in the alpha subunit. This chain is Succinate--CoA ligase [ADP-forming] subunit beta, found in Pseudomonas entomophila (strain L48).